Here is a 511-residue protein sequence, read N- to C-terminus: Histidine ammonia-lyase (511 aa).

The segment at residues 142–144 is a cross-link (5-imidazolinone (Ala-Gly)); sequence ASG. At serine 143 the chain carries 2,3-didehydroalanine (Ser).

Belongs to the PAL/histidase family. Post-translationally, contains an active site 4-methylidene-imidazol-5-one (MIO), which is formed autocatalytically by cyclization and dehydration of residues Ala-Ser-Gly.

Its subcellular location is the cytoplasm. It carries out the reaction L-histidine = trans-urocanate + NH4(+). The protein operates within amino-acid degradation; L-histidine degradation into L-glutamate; N-formimidoyl-L-glutamate from L-histidine: step 1/3. The protein is Histidine ammonia-lyase of Chelativorans sp. (strain BNC1).